Here is a 370-residue protein sequence, read N- to C-terminus: Molybdenum import ATP-binding protein ModC (370 aa).

Residues serine 2–glycine 233 form the ABC transporter domain. Glycine 31–threonine 38 lines the ATP pocket. Residues glycine 293 to asparagine 359 form the Mop domain.

Belongs to the ABC transporter superfamily. Molybdate importer (TC 3.A.1.8) family. The complex is composed of two ATP-binding proteins (ModC), two transmembrane proteins (ModB) and a solute-binding protein (ModA).

Its subcellular location is the cell inner membrane. It carries out the reaction molybdate(out) + ATP + H2O = molybdate(in) + ADP + phosphate + H(+). In terms of biological role, part of the ABC transporter complex ModABC involved in molybdenum import. Responsible for energy coupling to the transport system. This chain is Molybdenum import ATP-binding protein ModC, found in Mesorhizobium japonicum (strain LMG 29417 / CECT 9101 / MAFF 303099) (Mesorhizobium loti (strain MAFF 303099)).